A 75-amino-acid chain; its full sequence is Small ribosomal subunit protein bS18 (75 aa).

The protein belongs to the bacterial ribosomal protein bS18 family. In terms of assembly, part of the 30S ribosomal subunit. Forms a tight heterodimer with protein bS6.

Functionally, binds as a heterodimer with protein bS6 to the central domain of the 16S rRNA, where it helps stabilize the platform of the 30S subunit. This Buchnera aphidicola subsp. Acyrthosiphon pisum (strain 5A) protein is Small ribosomal subunit protein bS18.